A 328-amino-acid polypeptide reads, in one-letter code: Dolichyl-diphosphooligosaccharide--protein glycosyltransferase subunit MAGT1 (328 aa).

Residues 1 to 22 (MLHKLLIVVFLVVCLHDMRLNG) form the signal peptide. The Extracellular portion of the chain corresponds to 23-177 (QKKKETLLSE…DVHIRVIRPP (155 aa)). The 129-residue stretch at 40–168 (WVSKRAVVRL…LARWVADRTD (129 aa)) folds into the Thioredoxin domain. Asn64 is a glycosylation site (N-linked (GlcNAc...) asparagine). Cys80 and Cys83 are joined by a disulfide. A helical transmembrane segment spans residues 178–198 (NYAGPLMLGLLLAFIGSLAYL). The Cytoplasmic segment spans residues 199-202 (RRNN). Residues 203–223 (LEFLFNKNVWAFSALCFVLIM) traverse the membrane as a helical segment. At 224–257 (TSGQMWNHIRGPPYAHKNPNTGQVSYIHGSSQAQ) the chain is on the extracellular side. The chain crosses the membrane as a helical span at residues 258-278 (FVAETHIVLLFNAAVTIGMVL). Over 279–293 (LHEAATSGLDIVKRK) the chain is Cytoplasmic. A helical transmembrane segment spans residues 294 to 314 (IMCVAGIGLVVLFFSWLLSVF). The Extracellular portion of the chain corresponds to 315–328 (RAKYHGYPYSFLFG).

The protein belongs to the OST3/OST6 family. In terms of assembly, accessory component of the STT3B-containing form of the oligosaccharyltransferase (OST) complex.

The protein localises to the cell membrane. It localises to the endoplasmic reticulum. It is found in the endoplasmic reticulum membrane. It functions in the pathway protein modification; protein glycosylation. In terms of biological role, accessory component of the STT3B-containing form of the N-oligosaccharyl transferase (OST) complex which catalyzes the transfer of a high mannose oligosaccharide from a lipid-linked oligosaccharide donor to an asparagine residue within an Asn-X-Ser/Thr consensus motif in nascent polypeptide chains. Involved in N-glycosylation of STT3B-dependent substrates. Specifically required for the glycosylation of a subset of acceptor sites that are near cysteine residues; in this function seems to act redundantly with TUSC3. In its oxidized form proposed to form transient mixed disulfides with a glycoprotein substrate to facilitate access of STT3B to the unmodified acceptor site. Also has oxidoreductase-independent functions in the STT3B-containing OST complex possibly involving substrate recognition. Could indirectly play a role in Mg(2+) transport. This Danio rerio (Zebrafish) protein is Dolichyl-diphosphooligosaccharide--protein glycosyltransferase subunit MAGT1.